The following is a 203-amino-acid chain: VPS4-associated protein 1 (203 aa).

Positions 99 to 109 (EKETNNSKDPD) are enriched in basic and acidic residues. 2 disordered regions span residues 99-125 (EKET…AKND) and 171-193 (QVNR…EELL). A compositionally biased stretch (low complexity) spans 110–120 (PTTTDSTDTSP). The stretch at 121 to 157 (QAKNDAEILSETKKQYSKILDKVTELQRKNRKYELAK) forms a coiled coil. The span at 171–182 (QVNRERYLKEQE) shows a compositional bias: basic and acidic residues.

In terms of assembly, interacts with VPS4.

It localises to the cytoplasm. The protein resides in the endosome. Functionally, VPS4-associated protein involved in trafficking to the vacuole. This Saccharomyces cerevisiae (strain ATCC 204508 / S288c) (Baker's yeast) protein is VPS4-associated protein 1 (VFA1).